The following is a 560-amino-acid chain: Proteasome-associated ATPase (560 aa).

Residues 1 to 19 (MSQQHDDRRPPDTADRDLA) show a composition bias toward basic and acidic residues. Residues 1–21 (MSQQHDDRRPPDTADRDLARQ) are disordered. Positions 16–55 (RDLARQATSLAEKNERLTAALTAARAQLVEMKAQLEEVSK) form a coiled coil. 237 to 242 (GCGKTL) contributes to the ATP binding site. The segment at 559 to 560 (YL) is docks into pockets in the proteasome alpha-ring.

Belongs to the AAA ATPase family. As to quaternary structure, homohexamer. Assembles into a hexameric ring structure that caps the 20S proteasome core. Strongly interacts with the prokaryotic ubiquitin-like protein Pup through a hydrophobic interface; the interacting region of ARC lies in its N-terminal coiled-coil domain. There is one Pup binding site per ARC hexamer ring. Upon ATP-binding, the C-terminus of ARC interacts with the alpha-rings of the proteasome core, possibly by binding to the intersubunit pockets.

The protein operates within protein degradation; proteasomal Pup-dependent pathway. In terms of biological role, ATPase which is responsible for recognizing, binding, unfolding and translocation of pupylated proteins into the bacterial 20S proteasome core particle. May be essential for opening the gate of the 20S proteasome via an interaction with its C-terminus, thereby allowing substrate entry and access to the site of proteolysis. Thus, the C-termini of the proteasomal ATPase may function like a 'key in a lock' to induce gate opening and therefore regulate proteolysis. This chain is Proteasome-associated ATPase, found in Beutenbergia cavernae (strain ATCC BAA-8 / DSM 12333 / CCUG 43141 / JCM 11478 / NBRC 16432 / NCIMB 13614 / HKI 0122).